Consider the following 1066-residue polypeptide: FHIP family protein GH13096 (1066 aa).

Polar residues predominate over residues M1–R15. Positions M1–A33 are disordered. Over residues G18–N27 the composition is skewed to gly residues. S512 bears the Phosphoserine mark. 3 disordered regions span residues S647–G688, D827–N885, and S942–E1010. Low complexity predominate over residues N658–S687. Phosphoserine is present on S829. Low complexity predominate over residues H836–Q856. Residues P950–P963 show a composition bias toward polar residues. Low complexity predominate over residues A967–H996. Residues G1001 to E1010 show a composition bias toward polar residues.

This sequence belongs to the FHIP family.

The polypeptide is FHIP family protein GH13096 (Drosophila grimshawi (Hawaiian fruit fly)).